Consider the following 401-residue polypeptide: Probable sodium/metabolite cotransporter BASS1, chloroplastic (401 aa).

The transit peptide at 1–70 (MASAISLSLL…RRSRFDFVPR (70 aa)) directs the protein to the chloroplast. Helical transmembrane passes span 92–112 (FVGE…CLLG), 122–142 (VTPN…GMTL), 156–176 (ELFA…FFVS), 187–207 (AGLI…VTYI), 212–232 (VALS…MTPL), 247–267 (LGLL…GAFL), 278–298 (VSPV…GYAI), 311–331 (QVVL…YLFS), and 371–391 (VPCA…AGIW).

It belongs to the bile acid:sodium symporter (BASS) (TC 2.A.28) family.

The protein resides in the membrane. The protein localises to the plastid. It is found in the chloroplast envelope. Its function is as follows. May function as sodium-coupled metabolite transporter across the chloroplast envelope. The protein is Probable sodium/metabolite cotransporter BASS1, chloroplastic (BASS1) of Arabidopsis thaliana (Mouse-ear cress).